Consider the following 1772-residue polypeptide: Putative stereocilin-like protein (1772 aa).

An N-terminal signal peptide occupies residues 1–25; that stretch reads MALSLWPLLLLLLLLLLLSFAVTLA. N-linked (GlcNAc...) asparagine glycans are attached at residues Asn65, Asn427, Asn476, and Asn565.

It belongs to the stereocilin family.

The protein resides in the secreted. This is Putative stereocilin-like protein (STRCP1) from Homo sapiens (Human).